A 327-amino-acid chain; its full sequence is Elongation factor P--(R)-beta-lysine ligase (327 aa).

78–80 (SPE) is a substrate binding site. ATP contacts are provided by residues 102–104 (RNQ) and Asn111. A substrate-binding site is contributed by Tyr120. 246 to 247 (EL) lines the ATP pocket. Substrate is bound at residue Glu253. Position 302 (Gly302) interacts with ATP.

Belongs to the class-II aminoacyl-tRNA synthetase family. EpmA subfamily. In terms of assembly, homodimer.

The catalysed reaction is D-beta-lysine + L-lysyl-[protein] + ATP = N(6)-((3R)-3,6-diaminohexanoyl)-L-lysyl-[protein] + AMP + diphosphate + H(+). With EpmB is involved in the beta-lysylation step of the post-translational modification of translation elongation factor P (EF-P). Catalyzes the ATP-dependent activation of (R)-beta-lysine produced by EpmB, forming a lysyl-adenylate, from which the beta-lysyl moiety is then transferred to the epsilon-amino group of a conserved specific lysine residue in EF-P. The polypeptide is Elongation factor P--(R)-beta-lysine ligase (Baumannia cicadellinicola subsp. Homalodisca coagulata).